Consider the following 82-residue polypeptide: Cytochrome c oxidase-assembly factor cox-23, mitochondrial (82 aa).

Residues 1 to 27 (MAQAGSENKEPWNEETRAKFEGKSRSE) are disordered. Residues 7-27 (ENKEPWNEETRAKFEGKSRSE) show a composition bias toward basic and acidic residues. Residues 29-71 (LDPCQEAAQRSIRCLHRNQGDRTMCSDYFEAYRECKKQWIERR) enclose the CHCH domain. 2 short sequence motifs (cx9C motif) span residues 32–42 (CQEAAQRSIRC) and 53–63 (CSDYFEAYREC). Disulfide bonds link Cys-32/Cys-63 and Cys-42/Cys-53.

The protein belongs to the COX23 family.

The protein resides in the mitochondrion intermembrane space. Required for the assembly of cytochrome c oxidase. This is Cytochrome c oxidase-assembly factor cox-23, mitochondrial (cox-23) from Neurospora crassa (strain ATCC 24698 / 74-OR23-1A / CBS 708.71 / DSM 1257 / FGSC 987).